The primary structure comprises 370 residues: Glucan endo-1,3-beta-glucosidase, basic vacuolar isoform GLB (370 aa).

An N-terminal signal peptide occupies residues 1–32; the sequence is MSTSDKHNTPQMAAITLLGLLLVASTIEIAGA. Residue glutamine 33 is modified to Pyrrolidone carboxylic acid. Glutamate 128 (proton donor) is an active-site residue. Glutamate 273 serves as the catalytic Nucleophile. Residues 349–370 constitute a propeptide, removed in mature form; it reads VSGGVWDSSVETNATASLISEM. Asparagine 361 is a glycosylation site (N-linked (GlcNAc...) asparagine).

This sequence belongs to the glycosyl hydrolase 17 family. In terms of tissue distribution, is expressed primarily in epidermal cell of healthy plant, and following induction by ethylene, accumulates in mesophyll cells.

The protein localises to the vacuole. The enzyme catalyses Hydrolysis of (1-&gt;3)-beta-D-glucosidic linkages in (1-&gt;3)-beta-D-glucans.. Its function is as follows. Implicated in the defense of plants against pathogens. The sequence is that of Glucan endo-1,3-beta-glucosidase, basic vacuolar isoform GLB from Nicotiana tabacum (Common tobacco).